Here is a 599-residue protein sequence, read N- to C-terminus: DNA mismatch repair protein MutL (599 aa).

The protein belongs to the DNA mismatch repair MutL/HexB family.

Its function is as follows. This protein is involved in the repair of mismatches in DNA. It is required for dam-dependent methyl-directed DNA mismatch repair. May act as a 'molecular matchmaker', a protein that promotes the formation of a stable complex between two or more DNA-binding proteins in an ATP-dependent manner without itself being part of a final effector complex. The polypeptide is DNA mismatch repair protein MutL (Rhodopseudomonas palustris (strain BisB18)).